A 172-amino-acid chain; its full sequence is Bifunctional protein PyrR (172 aa).

Substrate is bound by residues Thr36–Gly37, Arg77, Asp94–Thr102, and Val151. A PRPP-binding motif is present at residues Leu90–Thr102.

It belongs to the purine/pyrimidine phosphoribosyltransferase family. PyrR subfamily.

It catalyses the reaction UMP + diphosphate = 5-phospho-alpha-D-ribose 1-diphosphate + uracil. Regulates the transcription of the pyrimidine nucleotide (pyr) operon in response to exogenous pyrimidines. Functionally, also displays a weak uracil phosphoribosyltransferase activity which is not physiologically significant. This Pseudomonas putida (Arthrobacter siderocapsulatus) protein is Bifunctional protein PyrR.